A 560-amino-acid chain; its full sequence is SET domain-containing protein 4 (560 aa).

Disordered stretches follow at residues 1–61 (MTSP…PSPQ) and 125–157 (KKQNQDDNSKVSVTHNESSKENKITPSMRAEDN). The segment covering 26–38 (SRSSSYSSNSSMS) has biased composition (low complexity). Positions 47-59 (LSVSSAASETLPS) are enriched in polar residues. A compositionally biased stretch (basic and acidic residues) spans 141–157 (ESSKENKITPSMRAEDN). The PHD-type zinc finger occupies 160–210 (KNGCICGSSDSKDELFIQCNKCKTWQHKLCYAFKKSDPIKRDFVCKRCDSD). One can recognise an SET domain in the interval 346-475 (ADIEVRKSSN…KGEEISVEWQ (130 aa)).

The protein belongs to the SET3 family.

In terms of biological role, putative chromatin regulator. This Saccharomyces cerevisiae (strain ATCC 204508 / S288c) (Baker's yeast) protein is SET domain-containing protein 4 (SET4).